A 339-amino-acid polypeptide reads, in one-letter code: F-box protein At3g22700 (339 aa).

One can recognise an F-box domain in the interval M1–A49.

This chain is F-box protein At3g22700, found in Arabidopsis thaliana (Mouse-ear cress).